The chain runs to 137 residues: Large ribosomal subunit protein bL17 (137 aa).

It belongs to the bacterial ribosomal protein bL17 family. As to quaternary structure, part of the 50S ribosomal subunit. Contacts protein L32.

The sequence is that of Large ribosomal subunit protein bL17 from Caulobacter vibrioides (strain ATCC 19089 / CIP 103742 / CB 15) (Caulobacter crescentus).